The following is a 115-amino-acid chain: Large ribosomal subunit protein bL19 (115 aa).

Belongs to the bacterial ribosomal protein bL19 family.

Its function is as follows. This protein is located at the 30S-50S ribosomal subunit interface and may play a role in the structure and function of the aminoacyl-tRNA binding site. The sequence is that of Large ribosomal subunit protein bL19 from Lactobacillus acidophilus (strain ATCC 700396 / NCK56 / N2 / NCFM).